We begin with the raw amino-acid sequence, 191 residues long: UPF0312 protein Sputw3181_1309 (191 aa).

The N-terminal stretch at 1–22 (MKKQLLSALIGVSLLVPMAASA) is a signal peptide.

This sequence belongs to the UPF0312 family. Type 1 subfamily.

The protein localises to the periplasm. This Shewanella sp. (strain W3-18-1) protein is UPF0312 protein Sputw3181_1309.